Here is an 86-residue protein sequence, read N- to C-terminus: U-actitoxin-Avd10a (86 aa).

The N-terminal stretch at 1–20 is a signal peptide; that stretch reads MSRIAILLFVAFLLVAGISA. A propeptide spanning residues 21 to 42 is cleaved from the precursor; it reads KSTAHFKKNVLADLFKERRFNA. Positions 51–86 constitute a ShKT domain; the sequence is CVNIDVDSFCDGMAERGACNIIPQMATNCAKACNSC. 3 cysteine pairs are disulfide-bonded: C51-C86, C60-C79, and C69-C83.

Belongs to the sea anemone type 1 potassium channel toxin family. Type 1b subfamily.

Its subcellular location is the secreted. The protein localises to the nematocyst. Its function is as follows. Inhibits voltage-gated potassium channels (Kv1/KCNA). The chain is U-actitoxin-Avd10a from Anemonia viridis (Snakelocks anemone).